The sequence spans 356 residues: UDP-N-acetylglucosamine--N-acetylmuramyl-(pentapeptide) pyrophosphoryl-undecaprenol N-acetylglucosamine transferase (356 aa).

UDP-N-acetyl-alpha-D-glucosamine-binding positions include 12–14, Asn-124, Arg-163, Ser-188, Ile-242, and Gln-287; that span reads TGG.

This sequence belongs to the glycosyltransferase 28 family. MurG subfamily.

It is found in the cell inner membrane. It carries out the reaction di-trans,octa-cis-undecaprenyl diphospho-N-acetyl-alpha-D-muramoyl-L-alanyl-D-glutamyl-meso-2,6-diaminopimeloyl-D-alanyl-D-alanine + UDP-N-acetyl-alpha-D-glucosamine = di-trans,octa-cis-undecaprenyl diphospho-[N-acetyl-alpha-D-glucosaminyl-(1-&gt;4)]-N-acetyl-alpha-D-muramoyl-L-alanyl-D-glutamyl-meso-2,6-diaminopimeloyl-D-alanyl-D-alanine + UDP + H(+). It functions in the pathway cell wall biogenesis; peptidoglycan biosynthesis. Cell wall formation. Catalyzes the transfer of a GlcNAc subunit on undecaprenyl-pyrophosphoryl-MurNAc-pentapeptide (lipid intermediate I) to form undecaprenyl-pyrophosphoryl-MurNAc-(pentapeptide)GlcNAc (lipid intermediate II). This Pseudomonas savastanoi pv. phaseolicola (strain 1448A / Race 6) (Pseudomonas syringae pv. phaseolicola (strain 1448A / Race 6)) protein is UDP-N-acetylglucosamine--N-acetylmuramyl-(pentapeptide) pyrophosphoryl-undecaprenol N-acetylglucosamine transferase.